The primary structure comprises 805 residues: Transducer protein BasT (805 aa).

Transmembrane regions (helical) follow at residues 25 to 45 (FNVL…YIHL) and 296 to 316 (NLAG…LTVG). HAMP domains follow at residues 317–370 (RRTS…TAAS) and 437–490 (ERLE…ATLA). One can recognise a Methyl-accepting transducer domain in the interval 509–745 (SAAEIRSASD…EVVTMIDEVT (237 aa)). Residues 513 to 532 (IRSASDQVSESVQDISADAD) form a disordered region. Polar residues predominate over residues 516–526 (ASDQVSESVQD). Glutamate methyl ester (Glu) occurs at positions 554, 736, and 763. Residues 752 to 779 (ATESQQVSAAAEEQAASVSEVAGRADDL) form a disordered region. Low complexity predominate over residues 754-773 (ESQQVSAAAEEQAASVSEVA).

It belongs to the methyl-accepting chemotaxis (MCP) protein family. As to quaternary structure, interacts with CheA, CheY, CheW1 and CheW2. Post-translationally, methylated by CheR.

It is found in the cell membrane. Functionally, mediates chemotaxis towards five attractant amino acids (leucine, isoleucine, valine, methionine and cysteine). Probably transduces the signal from the substrate-binding protein BasB to the histidine kinase CheA. The chain is Transducer protein BasT (basT) from Halobacterium salinarum (strain ATCC 29341 / DSM 671 / R1).